The following is a 339-amino-acid chain: Leucine-rich repeat-containing protein 75A (339 aa).

The tract at residues 1–25 is disordered; that stretch reads MGTRQTKGSLAERASPGAAPGPRRE. A compositionally biased stretch (low complexity) spans 11–21; that stretch reads AERASPGAAPG. 2 LRR repeats span residues 203 to 216 and 228 to 241; these read VDSV…LTDD and LPRL…GNRL. The disordered stretch occupies residues 294 to 339; that stretch reads LPTILELGEGPGTGEEAREGTDQQDPIGSPVTPARGQESTECVIQT. Serine 322 carries the phosphoserine modification. Residue threonine 325 is modified to Phosphothreonine. Positions 330–339 are enriched in polar residues; it reads QESTECVIQT.

Belongs to the LRRC75 family.

The polypeptide is Leucine-rich repeat-containing protein 75A (Lrrc75a) (Mus musculus (Mouse)).